The sequence spans 246 residues: Mast cell protease 1 (246 aa).

Residues 1–18 (MQALLFLMALLLPSGAGA) form the signal peptide. Positions 19 to 20 (EE) are cleaved as a propeptide — activation peptide. The region spanning 21–244 (IIGGVEARPH…YVPWIKTVIN (224 aa)) is the Peptidase S1 domain. An intrachain disulfide couples Cys50 to Cys66. Residue His65 is the Charge relay system of the active site. Asn102 carries an N-linked (GlcNAc...) asparagine glycan. The active-site Charge relay system is Asp109. 2 cysteine pairs are disulfide-bonded: Cys143–Cys208 and Cys174–Cys187. Ser202 acts as the Charge relay system in catalysis.

This sequence belongs to the peptidase S1 family. Granzyme subfamily. In terms of tissue distribution, mucosal mast cells.

It localises to the secreted. The protein resides in the cytoplasmic granule. Has a chymotrypsin-like activity. This chain is Mast cell protease 1 (Mcpt1), found in Mus musculus (Mouse).